Consider the following 404-residue polypeptide: Endophilin-B2 (404 aa).

Position 1 is an N-acetylmethionine (Met-1). Residues 1–27 form a membrane-binding amphipathic helix region; it reads MDFNMKKLASDAGIFFTRAVQFTEEKF. Ser-10 bears the Phosphoserine mark. Residues 24 to 291 enclose the BAR domain; it reads EEKFGQAEKT…LGSSQGAIFP (268 aa). The stretch at 209 to 239 forms a coiled coil; the sequence is SASALWNDEVDKAEQELRAAQTEFDRQAEVT. The region spanning 344–404 is the SH3 domain; sequence SGTRKARVLY…VPVTYLELLS (61 aa). Ser-404 bears the Phosphoserine mark.

It belongs to the endophilin family. In terms of assembly, homodimer, and heterodimer with SH3GLB1.

It is found in the cytoplasm. The sequence is that of Endophilin-B2 from Rattus norvegicus (Rat).